A 503-amino-acid chain; its full sequence is ATP synthase subunit alpha (503 aa).

170 to 177 (GDRATGKT) serves as a coordination point for ATP.

It belongs to the ATPase alpha/beta chains family. In terms of assembly, F-type ATPases have 2 components, CF(1) - the catalytic core - and CF(0) - the membrane proton channel. CF(1) has five subunits: alpha(3), beta(3), gamma(1), delta(1), epsilon(1). CF(0) has three main subunits: a(1), b(2) and c(9-12). The alpha and beta chains form an alternating ring which encloses part of the gamma chain. CF(1) is attached to CF(0) by a central stalk formed by the gamma and epsilon chains, while a peripheral stalk is formed by the delta and b chains.

Its subcellular location is the cell inner membrane. The enzyme catalyses ATP + H2O + 4 H(+)(in) = ADP + phosphate + 5 H(+)(out). Its function is as follows. Produces ATP from ADP in the presence of a proton gradient across the membrane. The alpha chain is a regulatory subunit. In Aquifex aeolicus (strain VF5), this protein is ATP synthase subunit alpha.